A 512-amino-acid polypeptide reads, in one-letter code: MKKIQFFDTTLRDGEQTPGVNFDVKEKIQIALQLEKLGIDVIEAGFPISSPGDFECVKAIAKAIKHCSVTGLARCVEGDIDRAEEALKDAVSPQIHIFLATSDVHMEYKLKMSRAEVLASIKHHISYARQKFEVVQFSPEDATRSDRAFLIEAVQTAIDAGATVINIPDTVGYTNPTEFGQLFQDLRREIKQFDDIIFASHCHDDLGMATANALAAIENGARRVEGTINGIGERAGNTALEEVAVALHIRKDFYQAETNIVLNQFKNSSDLISRLSGMPVPRNKAVIGGNAYAHESGIHQDGVLKNPDTYEIITPALVGVDKNSLPLGKLSGKHAFQTRMEEMGYNLSEQELKDAFKRFKQLADAKKEVTEDDLHALILGQSSESADDFELKHLQVQYVTGGVQGAIVRIAERDGTLIEDAATGSGSIEAIYNTINRLMKQNIELTNYHIQAITAGQDAQAEVHVVIKDKSGAEFHGIGIDFDVLTASAKAYLQASAKSKTGSKQADFEEVK.

The Pyruvate carboxyltransferase domain occupies 4-266 (IQFFDTTLRD…ETNIVLNQFK (263 aa)). Residues aspartate 13, histidine 201, histidine 203, and asparagine 237 each contribute to the Mn(2+) site. Residues 390-512 (ELKHLQVQYV…SKQADFEEVK (123 aa)) are regulatory domain.

The protein belongs to the alpha-IPM synthase/homocitrate synthase family. LeuA type 1 subfamily. As to quaternary structure, homodimer. The cofactor is Mn(2+).

It localises to the cytoplasm. The catalysed reaction is 3-methyl-2-oxobutanoate + acetyl-CoA + H2O = (2S)-2-isopropylmalate + CoA + H(+). It functions in the pathway amino-acid biosynthesis; L-leucine biosynthesis; L-leucine from 3-methyl-2-oxobutanoate: step 1/4. Catalyzes the condensation of the acetyl group of acetyl-CoA with 3-methyl-2-oxobutanoate (2-ketoisovalerate) to form 3-carboxy-3-hydroxy-4-methylpentanoate (2-isopropylmalate). The protein is 2-isopropylmalate synthase of Listeria monocytogenes serotype 4a (strain HCC23).